We begin with the raw amino-acid sequence, 820 residues long: Leucine-rich repeat and guanylate kinase domain-containing protein (820 aa).

Over residues 72–83 (EAEAEQEEKQQE) the composition is skewed to basic and acidic residues. Residues 72–96 (EAEAEQEEKQQEDGESEESEESEMQ) are disordered. A compositionally biased stretch (acidic residues) spans 84–94 (DGESEESEESE). LRR repeat units lie at residues 129-149 (YLNL…CGYV), 150-171 (HLQK…SCMP), 172-193 (YLLE…KPPQ), 194-215 (NLKK…SAYH), 216-237 (TLTQ…ENCI), 238-259 (SLTH…GTLP), 260-280 (IKVL…EELK), 281-302 (ALQN…ENHD), and 303-324 (LLEV…EYIE). The LRRCT domain maps to 337–375 (NPIQTKPEYWFFVIYMLLRLTELDQQKIKVEEKVFAVNK). Residues 414 to 597 (YPMLILTGPA…AYQKLSELIR (184 aa)) enclose the Guanylate kinase-like domain. 421–428 (GPAACGKR) serves as a coordination point for ATP. The segment at 800–820 (TIMDPGSNTKPTLPPIPHGRR) is disordered. Residues 811–820 (TLPPIPHGRR) are compositionally biased toward pro residues.

Interacts (via guanylate kinase-like domain) with RIMBP3 (via coiled-coil region). Interacts (via guanylate kinase-like domain) with HOOK2. Interacts (via LRRCT domain) with KLC3. Interacts with HOOK1 and HOOK3. As to expression, highly expressed in the testis. During spermatid development is initially localized to a supra-nuclear region of round spermatids, and is particularly evident at the leading edge of the developing acrosome and acroplaxome. As maturation proceeded and nuclear elongation initiated, LRGUK moves distally to ultimately reside on the microtubules of the manchette. LRGUK is also evident in the sperm basal body and the sperm tail.

It is found in the cytoplasmic vesicle. Its subcellular location is the secretory vesicle. The protein localises to the acrosome. It localises to the cytoplasm. The protein resides in the cytoskeleton. It is found in the cilium basal body. In terms of biological role, involved in multiple aspects of sperm assembly including acrosome attachment, shaping of the sperm head and in the early aspects of axoneme development. Not essential for primary cilium biogenesis. The chain is Leucine-rich repeat and guanylate kinase domain-containing protein (Lrguk) from Mus musculus (Mouse).